The chain runs to 361 residues: Putative F-box protein At3g25460 (361 aa).

In terms of domain architecture, F-box spans 1 to 45 (MMMPELPEDLLVEILCRVPATSLKRLRSTCKLWNHLYNDKRFKSK).

This Arabidopsis thaliana (Mouse-ear cress) protein is Putative F-box protein At3g25460.